The following is a 308-amino-acid chain: uncharacterized protein (308 aa).

NADP(+) is bound by residues leucine 50, aspartate 90, asparagine 117, tyrosine 182, lysine 186, isoleucine 222, and threonine 224. Tyrosine 182 acts as the Proton acceptor in catalysis. The active-site Lowers pKa of active site Tyr is the lysine 186.

The protein belongs to the short-chain dehydrogenases/reductases (SDR) family.

This is an uncharacterized protein from Saccharomyces cerevisiae (strain ATCC 204508 / S288c) (Baker's yeast).